The sequence spans 151 residues: SsrA-binding protein (151 aa).

It belongs to the SmpB family.

It is found in the cytoplasm. Its function is as follows. Required for rescue of stalled ribosomes mediated by trans-translation. Binds to transfer-messenger RNA (tmRNA), required for stable association of tmRNA with ribosomes. tmRNA and SmpB together mimic tRNA shape, replacing the anticodon stem-loop with SmpB. tmRNA is encoded by the ssrA gene; the 2 termini fold to resemble tRNA(Ala) and it encodes a 'tag peptide', a short internal open reading frame. During trans-translation Ala-aminoacylated tmRNA acts like a tRNA, entering the A-site of stalled ribosomes, displacing the stalled mRNA. The ribosome then switches to translate the ORF on the tmRNA; the nascent peptide is terminated with the 'tag peptide' encoded by the tmRNA and targeted for degradation. The ribosome is freed to recommence translation, which seems to be the essential function of trans-translation. In Flavobacterium johnsoniae (strain ATCC 17061 / DSM 2064 / JCM 8514 / BCRC 14874 / CCUG 350202 / NBRC 14942 / NCIMB 11054 / UW101) (Cytophaga johnsonae), this protein is SsrA-binding protein.